Here is a 270-residue protein sequence, read N- to C-terminus: Tryptophan synthase alpha chain (270 aa).

Residues glutamate 49 and aspartate 60 each act as proton acceptor in the active site.

It belongs to the TrpA family. As to quaternary structure, tetramer of two alpha and two beta chains.

It catalyses the reaction (1S,2R)-1-C-(indol-3-yl)glycerol 3-phosphate + L-serine = D-glyceraldehyde 3-phosphate + L-tryptophan + H2O. It participates in amino-acid biosynthesis; L-tryptophan biosynthesis; L-tryptophan from chorismate: step 5/5. In terms of biological role, the alpha subunit is responsible for the aldol cleavage of indoleglycerol phosphate to indole and glyceraldehyde 3-phosphate. This is Tryptophan synthase alpha chain from Pseudomonas fluorescens (strain Pf0-1).